Consider the following 470-residue polypeptide: BTB/POZ domain-containing protein 17 (470 aa).

An N-terminal signal peptide occupies residues 1 to 18 (MRMKGLYVVPLLLALVES). Residues 53–122 (SDTTLRIRTA…FYCGEISVNL (70 aa)) enclose the BTB domain. A BACK domain is found at 161–261 (VVSWYHYALR…ITPSQLFQIQ (101 aa)).

The protein localises to the secreted. This chain is BTB/POZ domain-containing protein 17 (btbd17), found in Xenopus laevis (African clawed frog).